A 162-amino-acid chain; its full sequence is Lymphocyte antigen 86 (162 aa).

A signal peptide spans 1–20; that stretch reads MKGFTATLFLWTLIFPSCSG. Intrachain disulfides connect Cys-33–Cys-58, Cys-45–Cys-154, and Cys-102–Cys-112. Asn-96 carries an N-linked (GlcNAc...) asparagine glycan. The N-linked (GlcNAc...) asparagine glycan is linked to Asn-156.

As to quaternary structure, M-shaped tetramer of two CD180-LY86 heterodimers. In terms of tissue distribution, highly expressed in B-cells, monocytes and tonsil.

The protein localises to the secreted. Its subcellular location is the extracellular space. In terms of biological role, may cooperate with CD180 and TLR4 to mediate the innate immune response to bacterial lipopolysaccharide (LPS) and cytokine production. Important for efficient CD180 cell surface expression. The polypeptide is Lymphocyte antigen 86 (LY86) (Homo sapiens (Human)).